The chain runs to 104 residues: Fusaric acid biosynthesis protein 2 (104 aa).

The protein belongs to the YciI family.

Its pathway is mycotoxin biosynthesis. Its function is as follows. Part of the gene cluster that mediates the biosynthesis of fusaric acid, a mycotoxin with low to moderate toxicity to animals and humans, but with high phytotoxic properties. L-aspartate is suggested as fusaric acid amino acid precursor that is activated and further processed to O-acetyl-L-homoserine by cluster enzymes aspartate kinase FUB3 and homoserine O-acetyltransferase FUB5, as well as enzymes of the primary metabolism. The polyketide synthase (PKS) FUB1 generates the triketide trans-2-hexenal which is presumptively released by the hydrolase FUB4 and linked to the NRPS-bound amino acid precursor by NAD(P)-dependent dehydrogenase FUB6. FUB1, FUB4, and the non-canonical NRPS Fub8 may form an enzyme complex. Further processing of the NRPS-bound intermediate might be carried out by FUB6 and the sulfhydrylase FUB7, enabling a spontaneous electrocyclization to close the carbon backbone of fusaric acid. Dihydrofusaric acid is likely to be released via reduction by the thioester reductase (TR) domain of FUB8 whereupon the final oxidation to fusaric acid may (also) be performed by the FMN-dependent dehydrogenase FUB9. The protein is Fusaric acid biosynthesis protein 2 of Gibberella moniliformis (strain M3125 / FGSC 7600) (Maize ear and stalk rot fungus).